Here is a 956-residue protein sequence, read N- to C-terminus: Dual specificity protein kinase YAK1 homolog (956 aa).

The region spanning 122 to 464 (YIVKDLLGHG…PFQAAKHPFI (343 aa)) is the Protein kinase domain. ATP is bound by residues 128-136 (LGHGTFGQV) and K151. S222 carries the post-translational modification Phosphoserine. D249 functions as the Proton acceptor in the catalytic mechanism. Disordered stretches follow at residues 620–657 (LGTS…HGSP), 672–781 (SAGY…NYSD), and 806–956 (GSTD…GSIA). The segment covering 622 to 636 (TSPSQFTPNTNNQFL) has biased composition (polar residues). A compositionally biased stretch (low complexity) spans 672–691 (SAGYSGGSQSQDSSLSQAQG). Composition is skewed to polar residues over residues 697–713 (FYQN…SPSR), 725–757 (QTQG…SSTA), and 806–817 (GSTDASSYSRRF). Residues 818 to 830 (NSNASTSSSNPTT) are compositionally biased toward low complexity. Composition is skewed to polar residues over residues 838–849 (QAFSQVETGSPP), 870–884 (VSQN…QPPQ), and 902–912 (MNAQLPPSNTN). Residues 913 to 924 (SGGQQRSPRSSS) are compositionally biased toward low complexity. Positions 937-947 (NHVPNVPSTSH) are enriched in polar residues.

This sequence belongs to the protein kinase superfamily. Ser/Thr protein kinase family. In terms of processing, autophosphorylated at Ser-222.

It catalyses the reaction L-seryl-[protein] + ATP = O-phospho-L-seryl-[protein] + ADP + H(+). The enzyme catalyses L-threonyl-[protein] + ATP = O-phospho-L-threonyl-[protein] + ADP + H(+). The catalysed reaction is L-tyrosyl-[protein] + ATP = O-phospho-L-tyrosyl-[protein] + ADP + H(+). Dual specificity protein kinase that phosphorylates ANN1, ANN2 and CP29B at serine and threonine residues, and ANN1, ANN2 and ANN4 at tyrosine residues. May regulate the phosphorylation status of annexin proteins. Acts as a positive regulator in abscisic acid (ABA)-mediated regulation of postgermination growth and drought response. May regulate the expression of ABA-responsive genes such as RD22, RD29A, LTI65/RD29B and RAB18. The polypeptide is Dual specificity protein kinase YAK1 homolog (Arabidopsis thaliana (Mouse-ear cress)).